A 423-amino-acid chain; its full sequence is Polyglutamylase complex subunit TTLL1 (423 aa).

The TTL domain occupies 1 to 367 (MAGRVKWVTD…NGEIPDCKWN (367 aa)). ATP-binding positions include Lys138, 144 to 145 (QG), 181 to 184 (SVYI), and 194 to 196 (KFD). A protein is bound at residue Gln144. Arg220 is a binding site for L-glutamate. An ATP-binding site is contributed by 241–242 (TN). Lys259 is a binding site for L-glutamate. The Mg(2+) site is built by Asp313, Glu326, and Asn328. Lys344 provides a ligand contact to L-glutamate. Residues 390-423 (DGAERELRNRPGQPVGPRAGRSRDSGRSVLTTWK) form a disordered region.

The protein belongs to the tubulin polyglutamylase family. Part of the neuronal tubulin polyglutamylase complex which contains TPGS1, TPGS2, TTLL1, LRRC49 and NICN1. Interacts with PCM1, CSTPP1 and LRRC49. Mg(2+) serves as cofactor. As to expression, highly expressed in brain, heart and kidney. Expressed in liver, lung, muscle, spleen, testis and trachea. In the brain, expressed in ependymal cilia, cortex, corpus callosum and striatum. Expressed in blastomere.

The protein localises to the cytoplasm. The protein resides in the cytoskeleton. It is found in the cilium basal body. It localises to the cilium axoneme. Its subcellular location is the cell projection. The protein localises to the cilium. The protein resides in the flagellum. The enzyme catalyses (L-glutamyl)(n)-gamma-L-glutamyl-L-glutamyl-[protein] + L-glutamate + ATP = (L-glutamyl)(n+1)-gamma-L-glutamyl-L-glutamyl-[protein] + ADP + phosphate + H(+). Functionally, catalytic subunit of a polyglutamylase complex which modifies tubulin, generating side chains of glutamate on the gamma-carboxyl group of specific glutamate residues within the C-terminal tail of tubulin. Probably involved in the side-chain elongation step of the polyglutamylation reaction rather than the initiation step. Modifies both alpha- and beta-tubulins with a preference for the alpha-tail. Unlike most polyglutamylases of the tubulin--tyrosine ligase family, only displays a catalytic activity when in complex with other proteins as it is most likely lacking domains important for autonomous activity. Part of the neuronal tubulin polyglutamylase complex. Mediates cilia and flagella polyglutamylation which is essential for their biogenesis and motility. Involved in respiratory motile cilia function through the regulation of beating asymmetry. Essential for sperm flagella biogenesis, motility and male fertility. Also mediates glutamylation of non-tubulin proteins. Involved in KLF4 glutamylation which impedes its ubiquitination, thereby leading to somatic cell reprogramming, pluripotency maintenance and embryogenesis. The protein is Polyglutamylase complex subunit TTLL1 of Mus musculus (Mouse).